Reading from the N-terminus, the 430-residue chain is Serine--tRNA ligase (430 aa).

236–238 provides a ligand contact to L-serine; sequence TAE. 267–269 lines the ATP pocket; the sequence is RSE. Glu290 serves as a coordination point for L-serine. 354-357 contributes to the ATP binding site; sequence EISS. L-serine is bound at residue Ser390.

This sequence belongs to the class-II aminoacyl-tRNA synthetase family. Type-1 seryl-tRNA synthetase subfamily. In terms of assembly, homodimer. The tRNA molecule binds across the dimer.

It localises to the cytoplasm. It catalyses the reaction tRNA(Ser) + L-serine + ATP = L-seryl-tRNA(Ser) + AMP + diphosphate + H(+). The catalysed reaction is tRNA(Sec) + L-serine + ATP = L-seryl-tRNA(Sec) + AMP + diphosphate + H(+). It participates in aminoacyl-tRNA biosynthesis; selenocysteinyl-tRNA(Sec) biosynthesis; L-seryl-tRNA(Sec) from L-serine and tRNA(Sec): step 1/1. In terms of biological role, catalyzes the attachment of serine to tRNA(Ser). Is also able to aminoacylate tRNA(Sec) with serine, to form the misacylated tRNA L-seryl-tRNA(Sec), which will be further converted into selenocysteinyl-tRNA(Sec). The protein is Serine--tRNA ligase of Mannheimia succiniciproducens (strain KCTC 0769BP / MBEL55E).